The following is a 128-amino-acid chain: Large ribosomal subunit protein bL17 (128 aa).

The protein belongs to the bacterial ribosomal protein bL17 family. In terms of assembly, part of the 50S ribosomal subunit. Contacts protein L32.

The polypeptide is Large ribosomal subunit protein bL17 (Pseudomonas savastanoi pv. phaseolicola (strain 1448A / Race 6) (Pseudomonas syringae pv. phaseolicola (strain 1448A / Race 6))).